The chain runs to 200 residues: ATP synthase subunit b 2 (200 aa).

Residues 1–16 (MAEQNILTTPSPNADT) show a composition bias toward polar residues. A disordered region spans residues 1–38 (MAEQNILTTPSPNADTTIVPPGSPHTHTEQPSGGHGGA). Residues 46–66 (TFLAQLIWLALAFGLLYYLMS) traverse the membrane as a helical segment.

The protein belongs to the ATPase B chain family. F-type ATPases have 2 components, F(1) - the catalytic core - and F(0) - the membrane proton channel. F(1) has five subunits: alpha(3), beta(3), gamma(1), delta(1), epsilon(1). F(0) has three main subunits: a(1), b(2) and c(10-14). The alpha and beta chains form an alternating ring which encloses part of the gamma chain. F(1) is attached to F(0) by a central stalk formed by the gamma and epsilon chains, while a peripheral stalk is formed by the delta and b chains.

Its subcellular location is the cell inner membrane. F(1)F(0) ATP synthase produces ATP from ADP in the presence of a proton or sodium gradient. F-type ATPases consist of two structural domains, F(1) containing the extramembraneous catalytic core and F(0) containing the membrane proton channel, linked together by a central stalk and a peripheral stalk. During catalysis, ATP synthesis in the catalytic domain of F(1) is coupled via a rotary mechanism of the central stalk subunits to proton translocation. Its function is as follows. Component of the F(0) channel, it forms part of the peripheral stalk, linking F(1) to F(0). The b'-subunit is a diverged and duplicated form of b found in plants and photosynthetic bacteria. This chain is ATP synthase subunit b 2 (atpF2), found in Methylorubrum populi (strain ATCC BAA-705 / NCIMB 13946 / BJ001) (Methylobacterium populi).